A 276-amino-acid chain; its full sequence is Small ribosomal subunit protein uS3 (276 aa).

The KH type-2 domain occupies 39-110 (IRRETMKFFK…KINIKIKEIK (72 aa)). A disordered region spans residues 218–243 (DAGQVINRKSSREKSEHFDRSRVDDR). Over residues 227–243 (SSREKSEHFDRSRVDDR) the composition is skewed to basic and acidic residues.

Belongs to the universal ribosomal protein uS3 family. In terms of assembly, part of the 30S ribosomal subunit. Forms a tight complex with proteins S10 and S14.

Its function is as follows. Binds the lower part of the 30S subunit head. Binds mRNA in the 70S ribosome, positioning it for translation. The sequence is that of Small ribosomal subunit protein uS3 from Borrelia hermsii (strain HS1 / DAH).